The sequence spans 119 residues: Holo-[acyl-carrier-protein] synthase (119 aa).

Residues D8 and E58 each contribute to the Mg(2+) site.

It belongs to the P-Pant transferase superfamily. AcpS family. It depends on Mg(2+) as a cofactor.

Its subcellular location is the cytoplasm. It catalyses the reaction apo-[ACP] + CoA = holo-[ACP] + adenosine 3',5'-bisphosphate + H(+). Functionally, transfers the 4'-phosphopantetheine moiety from coenzyme A to a Ser of acyl-carrier-protein. The protein is Holo-[acyl-carrier-protein] synthase of Oceanobacillus iheyensis (strain DSM 14371 / CIP 107618 / JCM 11309 / KCTC 3954 / HTE831).